Reading from the N-terminus, the 294-residue chain is MSDYIASALSRDEHFRIFAADATQTVREAQRRHDTWSASSAALGRALVATALLAASGLKNADDMLTVRIKGDGPVGALVTDGTNVGTVRGYVEEPHVNLPLNLVGKIDVARAVGKRGLLAVTKDIGVGDPFTGQVPLVSGELAEDFTYYLAKSEQIPAAVGLSVFVNADNTIQVAGGFMLQALPGANDAELSELEANVKTLPLVSELLKSGLTPKQIIQRIAGDEPVQFLDAQPLKFACNCSKEHFGDIMATLPHAQLQEMIDQDGGAETTCKFCGNQYHYTVADLEALMTRHE.

2 disulfide bridges follow: Cys239-Cys241 and Cys272-Cys275.

This sequence belongs to the HSP33 family. In terms of processing, under oxidizing conditions two disulfide bonds are formed involving the reactive cysteines. Under reducing conditions zinc is bound to the reactive cysteines and the protein is inactive.

The protein localises to the cytoplasm. Its function is as follows. Redox regulated molecular chaperone. Protects both thermally unfolding and oxidatively damaged proteins from irreversible aggregation. Plays an important role in the bacterial defense system toward oxidative stress. The protein is 33 kDa chaperonin of Lacticaseibacillus paracasei (strain ATCC 334 / BCRC 17002 / CCUG 31169 / CIP 107868 / KCTC 3260 / NRRL B-441) (Lactobacillus paracasei).